The chain runs to 470 residues: Cysteine--tRNA ligase (470 aa).

C27 contacts Zn(2+). The 'HIGH' region motif lies at 29-39 (PTVYNFFHIGN). The Zn(2+) site is built by C211, H236, and E240. A 'KMSKS' region motif is present at residues 268 to 272 (KMSKS). K271 provides a ligand contact to ATP.

It belongs to the class-I aminoacyl-tRNA synthetase family. In terms of assembly, monomer. Zn(2+) serves as cofactor.

The protein resides in the cytoplasm. It carries out the reaction tRNA(Cys) + L-cysteine + ATP = L-cysteinyl-tRNA(Cys) + AMP + diphosphate. This is Cysteine--tRNA ligase from Clostridium botulinum (strain Alaska E43 / Type E3).